The primary structure comprises 1001 residues: Sarcoplasmic/endoplasmic reticulum calcium ATPase 1 (1001 aa).

Transmembrane regions (helical) follow at residues 49–69 (LWEL…LLAA), 90–110 (EPFV…WQER), 254–273 (DEFG…AVWL), and 296–313 (FKIA…GLPA). Positions 304, 305, 307, and 309 each coordinate Ca(2+). Residue Asp-351 is the 4-aspartylphosphate intermediate of the active site. Asp-351 and Thr-353 together coordinate Mg(2+). Thr-353 lines the ATP pocket. Thr-441 carries the phosphothreonine modification. Residues Glu-442, Arg-489, Lys-515, and Arg-560 each coordinate ATP. A Phosphothreonine modification is found at Thr-569. Ser-581 bears the Phosphoserine mark. ATP is bound by residues Thr-625, Gly-626, Asp-627, Arg-678, and Lys-684. Asp-703 lines the Mg(2+) pocket. Asn-706 provides a ligand contact to ATP. Transmembrane regions (helical) follow at residues 758–777 (KQFI…CIFL), 788–808 (IPVQ…TALG), and 829–851 (ISGW…TVGA). Residues Asn-768, Glu-771, Asn-796, Thr-799, and Asp-800 each coordinate Ca(2+). Positions 788 to 808 (IPVQLLWVNLVTDGLPATALG) are interaction with PLN. Cys-876 and Cys-888 are joined by a disulfide. Helical transmembrane passes span 898-917 (TMAL…NSLS), 931-949 (IWLL…LILY), and 965-985 (TQWL…EILK). Residue Glu-908 participates in Ca(2+) binding. Residues 932–943 (WLLGSICLSMSL) are interaction with PLN.

The protein belongs to the cation transport ATPase (P-type) (TC 3.A.3) family. Type IIA subfamily. In terms of assembly, interacts with sarcolipin (SLN). Interacts with phospholamban (PLN). Interacts with myoregulin (MRLN). Interacts with DWORF. Interacts with VMP1. Requires Mg(2+) as cofactor. Skeletal muscle, fast twitch muscle (type II) fibers.

The protein resides in the endoplasmic reticulum membrane. The protein localises to the sarcoplasmic reticulum membrane. It catalyses the reaction Ca(2+)(in) + ATP + H2O = Ca(2+)(out) + ADP + phosphate + H(+). Its activity is regulated as follows. Inhibited by sarcolipin (SLN) and myoregulin (MRLN). Has also been shown to be reversibly inhibited by phospholamban (PLN) at low calcium concentrations in vitro. Dephosphorylated PLN decreases the apparent affinity of the ATPase for calcium and this inhibition is regulated by the phosphorylation of PLN in vitro. Enhanced by DWORF; DWORF increases activity by displacing sarcolipin (SLN), phospholamban (PLN) and myoregulin (MRLN). Functionally, key regulator of striated muscle performance by acting as the major Ca(2+) ATPase responsible for the reuptake of cytosolic Ca(2+) into the sarcoplasmic reticulum. Catalyzes the hydrolysis of ATP coupled with the translocation of calcium from the cytosol to the sarcoplasmic reticulum lumen. Contributes to calcium sequestration involved in muscular excitation/contraction. The sequence is that of Sarcoplasmic/endoplasmic reticulum calcium ATPase 1 from Homo sapiens (Human).